The sequence spans 425 residues: Enolase (425 aa).

Position 170 (Gln170) interacts with (2R)-2-phosphoglycerate. The active-site Proton donor is the Glu214. Asp250, Glu291, and Asp317 together coordinate Mg(2+). (2R)-2-phosphoglycerate is bound by residues Lys342, Arg371, Ser372, and Lys393. Lys342 acts as the Proton acceptor in catalysis.

The protein belongs to the enolase family. It depends on Mg(2+) as a cofactor.

It is found in the cytoplasm. It localises to the secreted. The protein resides in the cell surface. The catalysed reaction is (2R)-2-phosphoglycerate = phosphoenolpyruvate + H2O. The protein operates within carbohydrate degradation; glycolysis; pyruvate from D-glyceraldehyde 3-phosphate: step 4/5. Catalyzes the reversible conversion of 2-phosphoglycerate (2-PG) into phosphoenolpyruvate (PEP). It is essential for the degradation of carbohydrates via glycolysis. The polypeptide is Enolase (Methanococcoides burtonii (strain DSM 6242 / NBRC 107633 / OCM 468 / ACE-M)).